The primary structure comprises 313 residues: Ribosomal RNA small subunit methyltransferase H (313 aa).

Residues 35–37, D55, F80, D102, and Q109 contribute to the S-adenosyl-L-methionine site; that span reads GGH.

Belongs to the methyltransferase superfamily. RsmH family.

The protein localises to the cytoplasm. The enzyme catalyses cytidine(1402) in 16S rRNA + S-adenosyl-L-methionine = N(4)-methylcytidine(1402) in 16S rRNA + S-adenosyl-L-homocysteine + H(+). Specifically methylates the N4 position of cytidine in position 1402 (C1402) of 16S rRNA. This chain is Ribosomal RNA small subunit methyltransferase H, found in Shewanella sp. (strain MR-7).